Reading from the N-terminus, the 141-residue chain is ATP synthase epsilon chain (141 aa).

The protein belongs to the ATPase epsilon chain family. As to quaternary structure, F-type ATPases have 2 components, CF(1) - the catalytic core - and CF(0) - the membrane proton channel. CF(1) has five subunits: alpha(3), beta(3), gamma(1), delta(1), epsilon(1). CF(0) has three main subunits: a, b and c.

The protein resides in the cell inner membrane. Functionally, produces ATP from ADP in the presence of a proton gradient across the membrane. This chain is ATP synthase epsilon chain, found in Pseudomonas syringae pv. syringae (strain B728a).